The sequence spans 366 residues: Chorismate synthase (366 aa).

Position 46 (arginine 46) interacts with NADP(+). FMN is bound by residues 122 to 124 (RSS), 243 to 244 (NG), glycine 284, 299 to 303 (KPTPS), and arginine 325.

It belongs to the chorismate synthase family. In terms of assembly, homotetramer. Requires FMNH2 as cofactor.

The enzyme catalyses 5-O-(1-carboxyvinyl)-3-phosphoshikimate = chorismate + phosphate. It functions in the pathway metabolic intermediate biosynthesis; chorismate biosynthesis; chorismate from D-erythrose 4-phosphate and phosphoenolpyruvate: step 7/7. Functionally, catalyzes the anti-1,4-elimination of the C-3 phosphate and the C-6 proR hydrogen from 5-enolpyruvylshikimate-3-phosphate (EPSP) to yield chorismate, which is the branch point compound that serves as the starting substrate for the three terminal pathways of aromatic amino acid biosynthesis. This reaction introduces a second double bond into the aromatic ring system. The chain is Chorismate synthase from Campylobacter hominis (strain ATCC BAA-381 / DSM 21671 / CCUG 45161 / LMG 19568 / NCTC 13146 / CH001A).